Reading from the N-terminus, the 339-residue chain is GTPase Obg (339 aa).

In terms of domain architecture, Obg spans 1 to 159; sequence MKFVDEAFVR…RELKLELKLL (159 aa). One can recognise an OBG-type G domain in the interval 160–333; it reads ADVGLLGLPN…LCYDLMSFLE (174 aa). Residues 166-173, 191-195, 213-216, 283-286, and 314-316 contribute to the GTP site; these read GLPNAGKS, FTTLY, DIPG, NKID, and SAI. Residues S173 and T193 each contribute to the Mg(2+) site.

Belongs to the TRAFAC class OBG-HflX-like GTPase superfamily. OBG GTPase family. In terms of assembly, monomer. Requires Mg(2+) as cofactor.

It localises to the cytoplasm. An essential GTPase which binds GTP, GDP and possibly (p)ppGpp with moderate affinity, with high nucleotide exchange rates and a fairly low GTP hydrolysis rate. Plays a role in control of the cell cycle, stress response, ribosome biogenesis and in those bacteria that undergo differentiation, in morphogenesis control. This chain is GTPase Obg, found in Coxiella burnetii (strain RSA 331 / Henzerling II).